The sequence spans 340 residues: Glycerol-3-phosphate dehydrogenase [NAD(P)+] (340 aa).

Positions 23, 24, 43, 44, and 113 each coordinate NADPH. Sn-glycerol 3-phosphate contacts are provided by lysine 113, glycine 141, and threonine 143. Alanine 145 contacts NADPH. Lysine 196, aspartate 249, serine 259, arginine 260, and asparagine 261 together coordinate sn-glycerol 3-phosphate. The active-site Proton acceptor is the lysine 196. Arginine 260 provides a ligand contact to NADPH. Glutamate 286 is a binding site for NADPH.

Belongs to the NAD-dependent glycerol-3-phosphate dehydrogenase family.

The protein localises to the cytoplasm. The enzyme catalyses sn-glycerol 3-phosphate + NAD(+) = dihydroxyacetone phosphate + NADH + H(+). It catalyses the reaction sn-glycerol 3-phosphate + NADP(+) = dihydroxyacetone phosphate + NADPH + H(+). Its pathway is membrane lipid metabolism; glycerophospholipid metabolism. Catalyzes the reduction of the glycolytic intermediate dihydroxyacetone phosphate (DHAP) to sn-glycerol 3-phosphate (G3P), the key precursor for phospholipid synthesis. The polypeptide is Glycerol-3-phosphate dehydrogenase [NAD(P)+] (Zymomonas mobilis subsp. mobilis (strain ATCC 31821 / ZM4 / CP4)).